The chain runs to 486 residues: UDP-N-acetylmuramoyl-L-alanyl-D-glutamate--2,6-diaminopimelate ligase (486 aa).

Serine 30 is a UDP-N-acetyl-alpha-D-muramoyl-L-alanyl-D-glutamate binding site. Position 112 to 118 (112 to 118 (GTNGKTT)) interacts with ATP. UDP-N-acetyl-alpha-D-muramoyl-L-alanyl-D-glutamate contacts are provided by residues 154-155 (TT), serine 181, glutamine 187, and arginine 189. Lysine 221 carries the post-translational modification N6-carboxylysine. Residues arginine 378, 402–405 (DNPR), glycine 455, and glutamate 459 contribute to the meso-2,6-diaminopimelate site. Positions 402–405 (DNPR) match the Meso-diaminopimelate recognition motif motif.

Belongs to the MurCDEF family. MurE subfamily. The cofactor is Mg(2+). Carboxylation is probably crucial for Mg(2+) binding and, consequently, for the gamma-phosphate positioning of ATP.

It is found in the cytoplasm. The enzyme catalyses UDP-N-acetyl-alpha-D-muramoyl-L-alanyl-D-glutamate + meso-2,6-diaminopimelate + ATP = UDP-N-acetyl-alpha-D-muramoyl-L-alanyl-gamma-D-glutamyl-meso-2,6-diaminopimelate + ADP + phosphate + H(+). The protein operates within cell wall biogenesis; peptidoglycan biosynthesis. In terms of biological role, catalyzes the addition of meso-diaminopimelic acid to the nucleotide precursor UDP-N-acetylmuramoyl-L-alanyl-D-glutamate (UMAG) in the biosynthesis of bacterial cell-wall peptidoglycan. The chain is UDP-N-acetylmuramoyl-L-alanyl-D-glutamate--2,6-diaminopimelate ligase from Cytophaga hutchinsonii (strain ATCC 33406 / DSM 1761 / CIP 103989 / NBRC 15051 / NCIMB 9469 / D465).